Consider the following 233-residue polypeptide: 5'-methylthioadenosine/S-adenosylhomocysteine nucleosidase (233 aa).

Glu-12 serves as the catalytic Proton acceptor. Substrate is bound by residues Gly-78, Ile-152, and 173–174; that span reads ME. Asp-197 functions as the Proton donor in the catalytic mechanism.

This sequence belongs to the PNP/UDP phosphorylase family. MtnN subfamily. In terms of assembly, homodimer.

It carries out the reaction S-adenosyl-L-homocysteine + H2O = S-(5-deoxy-D-ribos-5-yl)-L-homocysteine + adenine. The enzyme catalyses S-methyl-5'-thioadenosine + H2O = 5-(methylsulfanyl)-D-ribose + adenine. It catalyses the reaction 5'-deoxyadenosine + H2O = 5-deoxy-D-ribose + adenine. It participates in amino-acid biosynthesis; L-methionine biosynthesis via salvage pathway; S-methyl-5-thio-alpha-D-ribose 1-phosphate from S-methyl-5'-thioadenosine (hydrolase route): step 1/2. In terms of biological role, catalyzes the irreversible cleavage of the glycosidic bond in both 5'-methylthioadenosine (MTA) and S-adenosylhomocysteine (SAH/AdoHcy) to adenine and the corresponding thioribose, 5'-methylthioribose and S-ribosylhomocysteine, respectively. Also cleaves 5'-deoxyadenosine, a toxic by-product of radical S-adenosylmethionine (SAM) enzymes, into 5-deoxyribose and adenine. Thus, is required for in vivo function of the radical SAM enzymes biotin synthase and lipoic acid synthase, that are inhibited by 5'-deoxyadenosine accumulation. The sequence is that of 5'-methylthioadenosine/S-adenosylhomocysteine nucleosidase from Yersinia pestis bv. Antiqua (strain Angola).